Consider the following 259-residue polypeptide: Tubulin-specific chaperone C (259 aa).

The 130-residue stretch at 112–241 folds into the C-CAP/cofactor C-like domain; that stretch reads PEVYFENDTL…DEHPILDFTW (130 aa).

Belongs to the TBCC family.

The protein localises to the cytoplasm. Its subcellular location is the cytoskeleton. Its function is as follows. Tubulin-folding protein; involved in the final step of the tubulin folding pathway. The protein is Tubulin-specific chaperone C (cin2) of Schizosaccharomyces pombe (strain 972 / ATCC 24843) (Fission yeast).